A 614-amino-acid polypeptide reads, in one-letter code: MTMRSAVFKAAAAPAGGNPEQRLDYERAAALGGPEDEPGAAEAHFLPRHRKLKEPGPPLASSQGGSPAPSPAGCGGKGRGLLLPAGAAPGQQEESWGGSVPLPCPPPATKQAGIGGEPAAAGAGCSPRPKYQAVLPIQTGSLVAAAKEPTPWAGDKGGAASPAATASDPAGPPPLPLPGPPPLAPTATAGTLAASEGRWKSMRKSPLGGGGGSGASSQAACLKQILLLQLDLIEQQQQQLQAKEKEIEELKSERDTLLARIERMERRMQLVKKDNEKERHKLFQGYETEEREETELSEKIKLECQPELSETSQTLPPKPFSCGRSGKGHKRKSPFGSTERKTPVKKLAPEFSKVKTKTPKHSPIKEEPCGSLSETVCKRELRSQETPEKPRSSVDTPPRLSTPQKGPSTHPKEKAFSSEIEDLPYLSTTEMYLCRWHQPPPSPLPLRESSPKKEETVARCLMPSSVAGETSVLAVPSWRDHSVEPLRDPNPSDLLENLDDSVFSKRHAKLELDEKRRKRWDIQRIREQRILQRLQLRMYKKKGIQESEPEVTSFFPEPDDVESLMITPFLPVVAFGRPLPKLTPQNFELPWLDERSRCRLEIQKKQTPHRTCRK.

Disordered regions lie at residues 1–127 (MTMR…GCSP) and 147–217 (KEPT…GASS). Serine 66 and serine 126 each carry phosphoserine. A compositionally biased stretch (low complexity) spans 158–169 (GAASPAATASDP). Pro residues predominate over residues 170-184 (AGPPPLPLPGPPPLA). Residues 185–194 (PTATAGTLAA) are compositionally biased toward low complexity. Serine 205 carries the phosphoserine modification. A coiled-coil region spans residues 213–282 (SGASSQAACL…KDNEKERHKL (70 aa)). An interaction with MSL2 region spans residues 223–237 (KQILLLQLDLIEQQQ). 2 stretches are compositionally biased toward basic and acidic residues: residues 272-281 (KKDNEKERHK) and 294-304 (TELSEKIKLEC). Residues 272-420 (KKDNEKERHK…PKEKAFSSEI (149 aa)) form a disordered region. Lysine 301 is covalently cross-linked (Glycyl lysine isopeptide (Lys-Gly) (interchain with G-Cter in SUMO2)). Positions 317 to 346 (PKPFSCGRSGKGHKRKSPFGSTERKTPVKK) match the Nuclear localization signal motif. Lysine 353 is subject to N6-acetyllysine. Glycyl lysine isopeptide (Lys-Gly) (interchain with G-Cter in SUMO2) cross-links involve residues lysine 365 and lysine 378. Over residues 376–392 (VCKRELRSQETPEKPRS) the composition is skewed to basic and acidic residues. At serine 393 the chain carries Phosphoserine. The span at 393 to 407 (SVDTPPRLSTPQKGP) shows a compositional bias: polar residues. Position 396 is a phosphothreonine (threonine 396). Serine 442 bears the Phosphoserine mark. Positions 472–591 (VLAVPSWRDH…LTPQNFELPW (120 aa)) constitute a PEHE domain. The segment at 496–514 (ENLDDSVFSKRHAKLELDE) is interaction with KAT8 HAT domain. The Bipartite nuclear localization signal signature appears at 505–519 (KRHAKLELDEKRRKR). A sufficient for interaction with MSL3 MRG domain region spans residues 550-591 (EVTSFFPEPDDVESLMITPFLPVVAFGRPLPKLTPQNFELPW).

Belongs to the msl-1 family. Component of a multisubunit histone acetyltransferase complex (MSL) at least composed of the KAT8/MOF/MYST1, MSL1/hampin, MSL2 and MSL3. Forms a MSL heterotetrameric core with MSL2. Interacts (via PEHE domain) with KAT8 (via HAT domain) and MSL3 (via MRG domain); both interactions are direct. Directly interacts with NUPR1. Interacts with TP53BP1; this interaction may be required for MSL1 DNA repair activity, but not for histone acetyltransferase activity. Interacts with TTC4, ECM2 and PIHD1. Sumoylated with SUMO1.

It is found in the nucleus. The protein localises to the nucleoplasm. It localises to the nucleus speckle. Functionally, non-catalytic component of the MSL histone acetyltransferase complex, a multiprotein complex that mediates the majority of histone H4 acetylation at 'Lys-16' (H4K16ac), an epigenetic mark that prevents chromatin compaction. The MSL complex is required for chromosome stability and genome integrity by maintaining homeostatic levels of H4K16ac. The MSL complex is also involved in gene dosage by promoting up-regulation of genes expressed by the X chromosome. X up-regulation is required to compensate for autosomal biallelic expression. The MSL complex also participates in gene dosage compensation by promoting expression of Tsix non-coding RNA. Within the MSL complex, acts as a scaffold to tether MSL3 and KAT8 together for enzymatic activity regulation. Greatly enhances MSL2 E3 ubiquitin ligase activity, promoting monoubiquitination of histone H2B at 'Lys-34' (H2BK34Ub). This modification in turn stimulates histone H3 methylation at 'Lys-4' (H3K4me) and 'Lys-79' (H3K79me) and leads to gene activation, including that of HOXA9 and MEIS1. The chain is Male-specific lethal 1 homolog from Homo sapiens (Human).